Reading from the N-terminus, the 300-residue chain is Acetylglutamate kinase (300 aa).

Substrate contacts are provided by residues 68–69, arginine 90, and asparagine 194; that span reads GG.

It belongs to the acetylglutamate kinase family. ArgB subfamily.

The protein localises to the cytoplasm. The enzyme catalyses N-acetyl-L-glutamate + ATP = N-acetyl-L-glutamyl 5-phosphate + ADP. The protein operates within amino-acid biosynthesis; L-arginine biosynthesis; N(2)-acetyl-L-ornithine from L-glutamate: step 2/4. In terms of biological role, catalyzes the ATP-dependent phosphorylation of N-acetyl-L-glutamate. The protein is Acetylglutamate kinase of Methanocella arvoryzae (strain DSM 22066 / NBRC 105507 / MRE50).